Reading from the N-terminus, the 601-residue chain is ATP-dependent lipid A-core flippase (601 aa).

The next 5 helical transmembrane spans lie at 33 to 53 (CVAV…AKLI), 72 to 92 (VSLM…LSEY), 158 to 178 (VIGL…VFLV), 255 to 275 (LGGG…LYVV), and 283 to 303 (TITP…LSPI). The ABC transmembrane type-1 domain occupies 34-315 (VAVVAMIAYA…LSQVVSVMQR (282 aa)). Residues 347 to 583 (IEYRHVSLVY…RGGYADLYAM (237 aa)) enclose the ABC transporter domain. ATP is bound at residue 381–388 (GQSGSGKT).

The protein belongs to the ABC transporter superfamily. Lipid exporter (TC 3.A.1.106) family. In terms of assembly, homodimer.

It localises to the cell inner membrane. It catalyses the reaction ATP + H2O + lipid A-core oligosaccharideSide 1 = ADP + phosphate + lipid A-core oligosaccharideSide 2.. Involved in lipopolysaccharide (LPS) biosynthesis. Translocates lipid A-core from the inner to the outer leaflet of the inner membrane. Transmembrane domains (TMD) form a pore in the inner membrane and the ATP-binding domain (NBD) is responsible for energy generation. This chain is ATP-dependent lipid A-core flippase, found in Methylococcus capsulatus (strain ATCC 33009 / NCIMB 11132 / Bath).